A 337-amino-acid polypeptide reads, in one-letter code: tRNA N6-adenosine threonylcarbamoyltransferase (337 aa).

His-111 and His-115 together coordinate Fe cation. Substrate-binding positions include 134-138, Asp-167, Gly-180, and Asn-272; that span reads LVSGG. Asp-300 provides a ligand contact to Fe cation.

Belongs to the KAE1 / TsaD family. Fe(2+) is required as a cofactor.

The protein localises to the cytoplasm. It carries out the reaction L-threonylcarbamoyladenylate + adenosine(37) in tRNA = N(6)-L-threonylcarbamoyladenosine(37) in tRNA + AMP + H(+). Functionally, required for the formation of a threonylcarbamoyl group on adenosine at position 37 (t(6)A37) in tRNAs that read codons beginning with adenine. Is involved in the transfer of the threonylcarbamoyl moiety of threonylcarbamoyl-AMP (TC-AMP) to the N6 group of A37, together with TsaE and TsaB. TsaD likely plays a direct catalytic role in this reaction. In Erwinia tasmaniensis (strain DSM 17950 / CFBP 7177 / CIP 109463 / NCPPB 4357 / Et1/99), this protein is tRNA N6-adenosine threonylcarbamoyltransferase.